The chain runs to 77 residues: Cell division topological specificity factor (77 aa).

It belongs to the MinE family.

In terms of biological role, prevents the cell division inhibition by proteins MinC and MinD at internal division sites while permitting inhibition at polar sites. This ensures cell division at the proper site by restricting the formation of a division septum at the midpoint of the long axis of the cell. The chain is Cell division topological specificity factor from Helicobacter acinonychis (strain Sheeba).